We begin with the raw amino-acid sequence, 113 residues long: U10-theraphotoxin-Hs2a (113 aa).

The signal sequence occupies residues 1 to 21 (MNTVRVTFLLVFVLAVSLGQA). The propeptide occupies 22-67 (DEDGNRMEKRQKKTEAENLLLPKLEELDAKLWEEDSVESRNSRQKR). 3 cysteine pairs are disulfide-bonded: C68–C86, C75–C91, and C85–C106.

This sequence belongs to the neurotoxin 14 (magi-1) family. 02 (HWTX-XVIc) subfamily. In terms of tissue distribution, expressed by the venom gland.

Its subcellular location is the secreted. Probable ion channel inhibitor. The protein is U10-theraphotoxin-Hs2a of Cyriopagopus schmidti (Chinese bird spider).